The chain runs to 188 residues: Elongation factor P 1 (188 aa).

The protein belongs to the elongation factor P family.

Its subcellular location is the cytoplasm. Its pathway is protein biosynthesis; polypeptide chain elongation. Involved in peptide bond synthesis. Stimulates efficient translation and peptide-bond synthesis on native or reconstituted 70S ribosomes in vitro. Probably functions indirectly by altering the affinity of the ribosome for aminoacyl-tRNA, thus increasing their reactivity as acceptors for peptidyl transferase. This chain is Elongation factor P 1 (efp1), found in Porphyromonas gingivalis (strain ATCC BAA-308 / W83).